Here is a 225-residue protein sequence, read N- to C-terminus: Ribosome maturation factor RimM (225 aa).

The region spanning 144 to 225 (ADEFYWVDLI…RIVVDWEADY (82 aa)) is the PRC barrel domain.

Belongs to the RimM family. Binds ribosomal protein uS19.

The protein resides in the cytoplasm. An accessory protein needed during the final step in the assembly of 30S ribosomal subunit, possibly for assembly of the head region. Essential for efficient processing of 16S rRNA. May be needed both before and after RbfA during the maturation of 16S rRNA. It has affinity for free ribosomal 30S subunits but not for 70S ribosomes. The polypeptide is Ribosome maturation factor RimM (Burkholderia orbicola (strain MC0-3)).